We begin with the raw amino-acid sequence, 511 residues long: Glucans biosynthesis protein G (511 aa).

The signal sequence occupies residues 1 to 22 (MMKMRWLGAAIMLTLYASSSWA).

This sequence belongs to the OpgD/OpgG family.

The protein resides in the periplasm. Its pathway is glycan metabolism; osmoregulated periplasmic glucan (OPG) biosynthesis. Functionally, involved in the biosynthesis of osmoregulated periplasmic glucans (OPGs). The chain is Glucans biosynthesis protein G from Salmonella enteritidis PT4 (strain P125109).